We begin with the raw amino-acid sequence, 572 residues long: Urease subunit alpha (572 aa).

The Urease domain occupies 136 to 572; sequence GGIDTHIHWI…VPLAQRYFLF (437 aa). Histidine 141, histidine 143, and lysine 224 together coordinate Ni(2+). Lysine 224 carries the N6-carboxylysine modification. A substrate-binding site is contributed by histidine 226. Ni(2+)-binding residues include histidine 253 and histidine 279. Catalysis depends on histidine 327, which acts as the Proton donor. Aspartate 367 is a binding site for Ni(2+).

The protein belongs to the metallo-dependent hydrolases superfamily. Urease alpha subunit family. Heterotrimer of UreA (gamma), UreB (beta) and UreC (alpha) subunits. Three heterotrimers associate to form the active enzyme. Ni cation is required as a cofactor. Carboxylation allows a single lysine to coordinate two nickel ions.

The protein localises to the cytoplasm. The enzyme catalyses urea + 2 H2O + H(+) = hydrogencarbonate + 2 NH4(+). The protein operates within nitrogen metabolism; urea degradation; CO(2) and NH(3) from urea (urease route): step 1/1. The chain is Urease subunit alpha from Actinobacillus pleuropneumoniae serotype 5b (strain L20).